A 498-amino-acid chain; its full sequence is Na(+)/H(+) exchange regulatory cofactor NHE-RF4 (498 aa).

PDZ domains lie at 49-130 (FCLL…LAQH), 157-235 (LCHV…AGLE), 263-346 (CLNI…VDPE), and 394-475 (QCFL…GARN). At serine 329 the chain carries Phosphoserine.

In terms of assembly, interacts with the C-terminal region of GUCY2C. Interacts with C-terminal region of SLC9A3 and the interactions decrease in response to elevated calcium ion levels. Interacts with the C-terminal region of SLC34A1. Interacts with USP2 isoform 2. Interacts (via the third PDZ domain) with SLC26A3 (via PDZ-binding motif). This interaction leads to decreased expression of SLC26A3 on the cell membrane resulting in its reduced exchanger activity. Post-translationally, phosphorylation at Ser-329 negatively regulates its interaction with SLC26A3. Expressed in kidney and small intestine. Not detected in heart, brain, spleen, lung, liver, skeletal muscle or testis.

The protein resides in the cell membrane. It is found in the cytoplasm. Acts as a regulatory protein that associates with GUCY2C and negatively modulates its heat-stable enterotoxin-mediated activation. Stimulates SLC9A3 activity in the presence of elevated calcium ions. The chain is Na(+)/H(+) exchange regulatory cofactor NHE-RF4 (Nherf4) from Mus musculus (Mouse).